The primary structure comprises 472 residues: Regulator of G-protein signaling 6 (472 aa).

Residues K40–A115 form the DEP domain. Residues I261–V330 form the G protein gamma domain. Residues S336–F441 enclose the RGS domain.

In terms of assembly, interacts with GNB5. Interacts with RGS7BP, leading to regulate the subcellular location of the heterodimer formed with GNB5. Interacts with GNAI1.

The protein localises to the cytoplasm. The protein resides in the cytosol. Its subcellular location is the membrane. It is found in the nucleus. It localises to the cell membrane. Regulates G protein-coupled receptor signaling cascades. Inhibits signal transduction by increasing the GTPase activity of G protein alpha subunits, thereby driving them into their inactive GDP-bound form. The RGS6/GNB5 dimer enhances GNAO1 GTPase activity. This is Regulator of G-protein signaling 6 (RGS6) from Homo sapiens (Human).